The sequence spans 105 residues: Large ribosomal subunit protein eL30 (105 aa).

The protein belongs to the eukaryotic ribosomal protein eL30 family.

The chain is Large ribosomal subunit protein eL30 (rpl30e) from Methanococcus vannielii (strain ATCC 35089 / DSM 1224 / JCM 13029 / OCM 148 / SB).